Consider the following 500-residue polypeptide: Putative glucokinase-2 (500 aa).

S2 carries the N-acetylserine modification. Position 2 is a phosphoserine (S2). The Hexokinase domain maps to 12-498 (EALEDAVVEI…SGVGAALCAL (487 aa)). Positions 74–217 (NGTERGVLLA…LSMINVVALT (144 aa)) are hexokinase small subdomain. Residue K110 coordinates ATP. The tract at residues 159–185 (KMGFTFSYPVDQTSLSSGTLIRWTKSF) is glucose-binding. The segment at 218–487 (NDTVGTFLSH…RKIHLRLAKD (270 aa)) is hexokinase large subdomain. S470 carries the phosphoserine modification. 487–492 (DGSGVG) provides a ligand contact to ATP.

It belongs to the hexokinase family.

The protein localises to the cytoplasm. It catalyses the reaction D-glucose + ATP = D-glucose 6-phosphate + ADP + H(+). The protein operates within carbohydrate degradation; glycolysis; D-glyceraldehyde 3-phosphate and glycerone phosphate from D-glucose: step 1/4. Functionally, putative glucokinase involved in phosphorylation of aldohexoses and glucose uptake. Involved in sporulation. Required for the full activation of the early meiotic inducer IME1. In Saccharomyces cerevisiae (strain ATCC 204508 / S288c) (Baker's yeast), this protein is Putative glucokinase-2 (EMI2).